Reading from the N-terminus, the 275-residue chain is MPPLVFDIDHIKLLRKWGICGVLSGTLPTAAQQNVFLSVPLRLMLEDVLWLHLNNLADVKLIRQEGDEIMEGITLERGAKLSKIVNDRLNKSFEYQRKFKKDEHIAKLKKIGRINDKTTAEELQRLDKSSNNDQLIESSLFIDIANTSMILRDIRSDSDSLSRDDISDLLFKQYRQAGKMQTYFLYKALRDQGYVLSPGGRFGGKFIAYPGDPLRFHSHLTIQDAIDYHNEPIDLISMISGARLGTTVKKLWVIGGVAEETKETHFFSIEWAGFG.

Active-site residues include Tyr209, His217, and Lys250.

It belongs to the tRNA-intron endonuclease family. Heterotetramer composed of SEN2, SEN15, SEN34 and SEN54. Interacts directly with SEN15.

It is found in the nucleus. The protein resides in the endomembrane system. It localises to the mitochondrion outer membrane. The catalysed reaction is pretRNA = a 3'-half-tRNA molecule with a 5'-OH end + a 5'-half-tRNA molecule with a 2',3'-cyclic phosphate end + an intron with a 2',3'-cyclic phosphate and a 5'-hydroxyl terminus.. Constitutes one of the two catalytic subunit of the tRNA-splicing endonuclease complex, a complex responsible for identification and cleavage of the splice sites in pre-tRNA. It cleaves pre-tRNA at the 5'- and 3'-splice sites to release the intron. The products are an intron and two tRNA half-molecules bearing 2',3'-cyclic phosphate and 5'-OH termini. There are no conserved sequences at the splice sites, but the intron is invariably located at the same site in the gene, placing the splice sites an invariant distance from the constant structural features of the tRNA body. It probably carries the active site for 3'-splice site cleavage. In Saccharomyces cerevisiae (strain ATCC 204508 / S288c) (Baker's yeast), this protein is tRNA-splicing endonuclease subunit SEN34 (SEN34).